Reading from the N-terminus, the 98-residue chain is NADH-ubiquinone oxidoreductase chain 4L (98 aa).

The next 3 helical transmembrane spans lie at 1-21 (MALTYMNMALAFTVSLLGLLM), 29-49 (SLLCLEGMMLSLFVTMSLTIL), and 61-81 (IILLVFAACEAALGLSLLVMV).

The protein belongs to the complex I subunit 4L family. Core subunit of respiratory chain NADH dehydrogenase (Complex I) which is composed of 45 different subunits.

It localises to the mitochondrion inner membrane. The catalysed reaction is a ubiquinone + NADH + 5 H(+)(in) = a ubiquinol + NAD(+) + 4 H(+)(out). Core subunit of the mitochondrial membrane respiratory chain NADH dehydrogenase (Complex I) which catalyzes electron transfer from NADH through the respiratory chain, using ubiquinone as an electron acceptor. Part of the enzyme membrane arm which is embedded in the lipid bilayer and involved in proton translocation. The sequence is that of NADH-ubiquinone oxidoreductase chain 4L (MT-ND4L) from Pteropus dasymallus (Ryukyu flying fox).